The following is a 363-amino-acid chain: Peptide chain release factor 1 (363 aa).

Glutamine 237 bears the N5-methylglutamine mark.

The protein belongs to the prokaryotic/mitochondrial release factor family. In terms of processing, methylated by PrmC. Methylation increases the termination efficiency of RF1.

Its subcellular location is the cytoplasm. In terms of biological role, peptide chain release factor 1 directs the termination of translation in response to the peptide chain termination codons UAG and UAA. The sequence is that of Peptide chain release factor 1 from Marinobacter nauticus (strain ATCC 700491 / DSM 11845 / VT8) (Marinobacter aquaeolei).